The sequence spans 375 residues: F420-dependent formate dehydrogenase 2 subunit beta (375 aa).

4Fe-4S ferredoxin-type domains follow at residues 268 to 291 (PEPE…DVCP) and 320 to 349 (IRLS…AKIY). C280, C283, C286, C290, C329, C332, C335, and C339 together coordinate [4Fe-4S] cluster.

The protein belongs to the FrhB family. Dimer of an alpha (FdhA2) and a beta (FdhB2) subunit. Requires [4Fe-4S] cluster as cofactor. FAD serves as cofactor. The cofactor is Zn(2+).

It carries out the reaction oxidized coenzyme F420-(gamma-L-Glu)(n) + formate + 2 H(+) = reduced coenzyme F420-(gamma-L-Glu)(n) + CO2. In terms of biological role, catalyzes the oxidation of formate to carbon dioxide, with coenzyme F420 as the electron acceptor. In vitro can also use methyl viologen as electron acceptor. In Methanococcus maripaludis (strain DSM 14266 / JCM 13030 / NBRC 101832 / S2 / LL), this protein is F420-dependent formate dehydrogenase 2 subunit beta.